A 228-amino-acid polypeptide reads, in one-letter code: Triosephosphate isomerase (228 aa).

11–13 (NFK) lines the substrate pocket. Residue His-95 is the Electrophile of the active site. Glu-143 functions as the Proton acceptor in the catalytic mechanism. Residues Ile-148, Gly-183, and 204–205 (AS) each bind substrate.

This sequence belongs to the triosephosphate isomerase family. In terms of assembly, homotetramer; dimer of dimers.

It localises to the cytoplasm. The catalysed reaction is D-glyceraldehyde 3-phosphate = dihydroxyacetone phosphate. It participates in carbohydrate biosynthesis; gluconeogenesis. Its pathway is carbohydrate degradation; glycolysis; D-glyceraldehyde 3-phosphate from glycerone phosphate: step 1/1. Functionally, involved in the gluconeogenesis. Catalyzes stereospecifically the conversion of dihydroxyacetone phosphate (DHAP) to D-glyceraldehyde-3-phosphate (G3P). The polypeptide is Triosephosphate isomerase (Pyrococcus horikoshii (strain ATCC 700860 / DSM 12428 / JCM 9974 / NBRC 100139 / OT-3)).